Here is a 205-residue protein sequence, read N- to C-terminus: N-(5'-phosphoribosyl)anthranilate isomerase (205 aa).

The protein belongs to the TrpF family.

The catalysed reaction is N-(5-phospho-beta-D-ribosyl)anthranilate = 1-(2-carboxyphenylamino)-1-deoxy-D-ribulose 5-phosphate. The protein operates within amino-acid biosynthesis; L-tryptophan biosynthesis; L-tryptophan from chorismate: step 3/5. This chain is N-(5'-phosphoribosyl)anthranilate isomerase, found in Phocaeicola vulgatus (strain ATCC 8482 / DSM 1447 / JCM 5826 / CCUG 4940 / NBRC 14291 / NCTC 11154) (Bacteroides vulgatus).